Reading from the N-terminus, the 288-residue chain is tRNA-cytidine(32) 2-sulfurtransferase (288 aa).

The PP-loop motif motif lies at 70-75 (SGGKDS). The [4Fe-4S] cluster site is built by C145, C148, and C236.

This sequence belongs to the TtcA family. Homodimer. Mg(2+) is required as a cofactor. The cofactor is [4Fe-4S] cluster.

It localises to the cytoplasm. It catalyses the reaction cytidine(32) in tRNA + S-sulfanyl-L-cysteinyl-[cysteine desulfurase] + AH2 + ATP = 2-thiocytidine(32) in tRNA + L-cysteinyl-[cysteine desulfurase] + A + AMP + diphosphate + H(+). It participates in tRNA modification. Its function is as follows. Catalyzes the ATP-dependent 2-thiolation of cytidine in position 32 of tRNA, to form 2-thiocytidine (s(2)C32). The sulfur atoms are provided by the cysteine/cysteine desulfurase (IscS) system. The sequence is that of tRNA-cytidine(32) 2-sulfurtransferase from Bartonella tribocorum (strain CIP 105476 / IBS 506).